We begin with the raw amino-acid sequence, 123 residues long: Large ribosomal subunit protein uL18 (123 aa).

It belongs to the universal ribosomal protein uL18 family. As to quaternary structure, part of the 50S ribosomal subunit; part of the 5S rRNA/L5/L18/L25 subcomplex. Contacts the 5S and 23S rRNAs.

Its function is as follows. This is one of the proteins that bind and probably mediate the attachment of the 5S RNA into the large ribosomal subunit, where it forms part of the central protuberance. In Chlamydia pneumoniae (Chlamydophila pneumoniae), this protein is Large ribosomal subunit protein uL18.